Reading from the N-terminus, the 216-residue chain is Ras-related protein Rab-5C (216 aa).

The GTP site is built by serine 30, alanine 31, glycine 33, lysine 34, serine 35, serine 36, histidine 47, glutamate 48, threonine 53, and glycine 79. Serine 35 provides a ligand contact to Mg(2+). 2 consecutive short sequence motifs (switch) follow at residues 45–57 and 78–94; these read QFHE…IGAA and AGQE…YRGA. Residue threonine 53 coordinates Mg(2+). Phosphoserine is present on serine 85. GTP-binding residues include asparagine 134, lysine 135, aspartate 137, alanine 165, and lysine 166. The segment at 185–216 is disordered; sequence NEPQNAAGAPSRNRGVDLQENSPASRSQCCSN. Residues 203 to 216 are compositionally biased toward polar residues; it reads QENSPASRSQCCSN. S-geranylgeranyl cysteine attachment occurs at residues cysteine 213 and cysteine 214.

This sequence belongs to the small GTPase superfamily. Rab family. In terms of assembly, interacts with EEA1 and INCA1. Interacts with GDI1, GDI2, CHML and CHM; phosphorylation at Ser-85 disrupts this interaction. The cofactor is Mg(2+). Post-translationally, phosphorylation of Ser-85 in the switch II region by LRRK2 prevents the association of RAB regulatory proteins, including CHM, CHML and RAB GDP dissociation inhibitors GDI1 and GDI2.

It is found in the cell membrane. The protein resides in the early endosome membrane. Its subcellular location is the melanosome. It catalyses the reaction GTP + H2O = GDP + phosphate + H(+). With respect to regulation, regulated by guanine nucleotide exchange factors (GEFs) which promote the exchange of bound GDP for free GTP. Regulated by GTPase activating proteins (GAPs) which increase the GTP hydrolysis activity. Inhibited by GDP dissociation inhibitors (GDIs). Functionally, the small GTPases Rab are key regulators of intracellular membrane trafficking, from the formation of transport vesicles to their fusion with membranes. Rabs cycle between an inactive GDP-bound form and an active GTP-bound form that is able to recruit to membranes different sets of downstream effectors directly responsible for vesicle formation, movement, tethering and fusion. This chain is Ras-related protein Rab-5C (RAB5C), found in Canis lupus familiaris (Dog).